The sequence spans 96 residues: Exodeoxyribonuclease 7 small subunit (96 aa).

The disordered stretch occupies residues 73 to 96 (RAPEQSAANDVSAPGSAEEHDHGR).

Belongs to the XseB family. As to quaternary structure, heterooligomer composed of large and small subunits.

Its subcellular location is the cytoplasm. It carries out the reaction Exonucleolytic cleavage in either 5'- to 3'- or 3'- to 5'-direction to yield nucleoside 5'-phosphates.. In terms of biological role, bidirectionally degrades single-stranded DNA into large acid-insoluble oligonucleotides, which are then degraded further into small acid-soluble oligonucleotides. This Acidothermus cellulolyticus (strain ATCC 43068 / DSM 8971 / 11B) protein is Exodeoxyribonuclease 7 small subunit.